We begin with the raw amino-acid sequence, 1246 residues long: Respiratory nitrate reductase 2 alpha chain (1246 aa).

The 65-residue stretch at 43-107 (DKIVRSTHGV…SYSWYLYSAN (65 aa)) folds into the 4Fe-4S Mo/W bis-MGD-type domain. Residues histidine 50, cysteine 54, cysteine 58, and cysteine 93 each coordinate [4Fe-4S] cluster. Aspartate 223 lines the Mo-bis(molybdopterin guanine dinucleotide) pocket.

This sequence belongs to the prokaryotic molybdopterin-containing oxidoreductase family. Tetramer composed of an alpha, a beta and 2 gamma chains. Alpha and beta are catalytic chains; gamma chain is involved in binding the enzyme complex to the cytoplasmic membrane. It depends on [4Fe-4S] cluster as a cofactor. Mo-bis(molybdopterin guanine dinucleotide) serves as cofactor.

The protein localises to the cell membrane. The catalysed reaction is nitrate + a quinol = a quinone + nitrite + H2O. Its function is as follows. This is a second nitrate reductase enzyme which can substitute for the NRA enzyme and allows E.coli to use nitrate as an electron acceptor during anaerobic growth. Functionally, the alpha chain is the actual site of nitrate reduction. This is Respiratory nitrate reductase 2 alpha chain (narZ) from Escherichia coli (strain K12).